Reading from the N-terminus, the 241-residue chain is Probable cobalt-factor III C(17)-methyltransferase (241 aa).

Belongs to the precorrin methyltransferase family.

The catalysed reaction is Co(II)-factor III + S-adenosyl-L-methionine + H(+) = Co(II)-factor IV + S-adenosyl-L-homocysteine. It functions in the pathway cofactor biosynthesis; adenosylcobalamin biosynthesis; cob(II)yrinate a,c-diamide from sirohydrochlorin (anaerobic route): step 3/10. Its function is as follows. Methyltransferase that likely catalyzes the ring contraction and methylation of C-17 in cobalt-factor III to form cobalt-factor IV. May also convert cobalt-precorrin-3 to cobalt-precorrin-4. This Salmonella typhimurium (strain LT2 / SGSC1412 / ATCC 700720) protein is Probable cobalt-factor III C(17)-methyltransferase (cbiH).